Here is a 260-residue protein sequence, read N- to C-terminus: 3'-5' ssDNA/RNA exonuclease TatD (260 aa).

Residues Glu91, His127, and His152 each coordinate a divalent metal cation.

This sequence belongs to the metallo-dependent hydrolases superfamily. TatD-type hydrolase family. TatD subfamily. Monomer. It depends on Mg(2+) as a cofactor.

Its subcellular location is the cytoplasm. 3'-5' exonuclease that prefers single-stranded DNA and RNA. May play a role in the H(2)O(2)-induced DNA damage repair. The chain is 3'-5' ssDNA/RNA exonuclease TatD from Enterobacter lignolyticus (strain SCF1).